Here is a 49-residue protein sequence, read N- to C-terminus: Protein YlcJ (49 aa).

Positions 1-21 (MSLVLCFLLMSLFFMYSFVLS) are cleaved as a signal peptide.

The chain is Protein YlcJ from Escherichia coli (strain K12).